We begin with the raw amino-acid sequence, 108 residues long: UPF0145 protein Tmel_1129 (108 aa).

The protein belongs to the UPF0145 family.

The sequence is that of UPF0145 protein Tmel_1129 from Thermosipho melanesiensis (strain DSM 12029 / CIP 104789 / BI429).